The primary structure comprises 427 residues: Adenylosuccinate synthetase (427 aa).

Residues 12-18 and 40-42 each bind GTP; these read GDEGKGK and GHT. The active-site Proton acceptor is the aspartate 13. Mg(2+) contacts are provided by aspartate 13 and glycine 40. Residues 13–16, 38–41, threonine 128, arginine 142, glutamine 223, threonine 238, and arginine 302 each bind IMP; these read DEGK and NAGH. The Proton donor role is filled by histidine 41. A substrate-binding site is contributed by 298-304; it reads TTTGRAR. Residues arginine 304, 330–332, and 412–414 each bind GTP; these read KLD and AVG.

The protein belongs to the adenylosuccinate synthetase family. As to quaternary structure, homodimer. Mg(2+) serves as cofactor.

Its subcellular location is the cytoplasm. The enzyme catalyses IMP + L-aspartate + GTP = N(6)-(1,2-dicarboxyethyl)-AMP + GDP + phosphate + 2 H(+). Its pathway is purine metabolism; AMP biosynthesis via de novo pathway; AMP from IMP: step 1/2. In terms of biological role, plays an important role in the de novo pathway of purine nucleotide biosynthesis. Catalyzes the first committed step in the biosynthesis of AMP from IMP. This chain is Adenylosuccinate synthetase, found in Desulfitobacterium hafniense (strain DSM 10664 / DCB-2).